A 210-amino-acid chain; its full sequence is CASP-like protein 3A1 (210 aa).

The Cytoplasmic segment spans residues 1–44 (MNGLKTPPEIGIQLPEAKVAAETGTMSGPLVPPRSDRSVRRGTD). Residues 45-65 (VAHVVLRFVCLLTSVIALSLM) traverse the membrane as a helical segment. Residues 66 to 94 (ATAKEAASISIYGFLLPVSSKWSFSDSFE) lie on the Extracellular side of the membrane. The helical transmembrane segment at 95 to 115 (YLVGVSAAVAAHALLQLIISV) threads the bilayer. At 116–130 (SRLLRKSPVIPSRNH) the chain is on the cytoplasmic side. A helical transmembrane segment spans residues 131 to 151 (AWLIFAGDQAFAYAMLSAGSA). The Extracellular segment spans residues 152-185 (ASGVTNLNRTGIRHSPLPNFCKPLRSFCDHVAAS). A glycan (N-linked (GlcNAc...) asparagine) is linked at asparagine 159. The chain crosses the membrane as a helical span at residues 186 to 206 (IAFTFFSCFLLATSAILDVIW). Residues 207 to 210 (LSKY) lie on the Cytoplasmic side of the membrane.

The protein belongs to the Casparian strip membrane proteins (CASP) family. Homodimer and heterodimers.

Its subcellular location is the cell membrane. This is CASP-like protein 3A1 from Vitis vinifera (Grape).